The primary structure comprises 54 residues: ATP synthase protein 8 (54 aa).

The helical transmembrane segment at 9–25 threads the bilayer; the sequence is WVFLFFLVWLVLGFLGL.

The protein belongs to the ATPase protein 8 family. As to quaternary structure, F-type ATPases have 2 components, CF(1) - the catalytic core - and CF(0) - the membrane proton channel.

It is found in the mitochondrion membrane. In terms of biological role, mitochondrial membrane ATP synthase (F(1)F(0) ATP synthase or Complex V) produces ATP from ADP in the presence of a proton gradient across the membrane which is generated by electron transport complexes of the respiratory chain. F-type ATPases consist of two structural domains, F(1) - containing the extramembraneous catalytic core and F(0) - containing the membrane proton channel, linked together by a central stalk and a peripheral stalk. During catalysis, ATP synthesis in the catalytic domain of F(1) is coupled via a rotary mechanism of the central stalk subunits to proton translocation. Part of the complex F(0) domain. Minor subunit located with subunit a in the membrane. The protein is ATP synthase protein 8 (MTATP8) of Branchiostoma floridae (Florida lancelet).